A 206-amino-acid chain; its full sequence is MKLSLIFILAYLIGSFPSGVIIGRVFCHKDPRDAGSHNIGTTNSYRVLGPIAGTAVLFLDILKGTLAASLPMIFHTSNHSLVLVVGLAAVIGHAYSIFLRFTGGKAVATSAGILLAYNPLFFVIASTIFISVILITSMVSMASIIGPLLIAILSFYTHDWLLGTIATLVLIFLTYRHRENISRIKNGTENLVPFGLYYRYKQKKRQ.

5 helical membrane passes run 3–23 (LSLI…VIIG), 47–67 (VLGP…GTLA), 79–99 (HSLV…SIFL), 119–139 (PLFF…TSMV), and 152–172 (ILSF…VLIF).

The protein belongs to the PlsY family. As to quaternary structure, probably interacts with PlsX.

The protein localises to the cell membrane. It catalyses the reaction an acyl phosphate + sn-glycerol 3-phosphate = a 1-acyl-sn-glycero-3-phosphate + phosphate. It functions in the pathway lipid metabolism; phospholipid metabolism. Functionally, catalyzes the transfer of an acyl group from acyl-phosphate (acyl-PO(4)) to glycerol-3-phosphate (G3P) to form lysophosphatidic acid (LPA). This enzyme utilizes acyl-phosphate as fatty acyl donor, but not acyl-CoA or acyl-ACP. This Latilactobacillus sakei subsp. sakei (strain 23K) (Lactobacillus sakei subsp. sakei) protein is Glycerol-3-phosphate acyltransferase.